Here is a 193-residue protein sequence, read N- to C-terminus: Auxin-responsive protein IAA23 (193 aa).

Residues 1–12 are compositionally biased toward polar residues; the sequence is MSTSSGADSSPP. Residues 1–66 are disordered; the sequence is MSTSSGADSS…SPKARAVGWP (66 aa). Over residues 21–36 the composition is skewed to low complexity; it reads TALTLALPGSSSSSSS. Positions 23–27 match the EAR-like (transcriptional repression) motif; it reads LTLAL. Positions 39–53 are enriched in basic and acidic residues; that stretch reads DPERKRAAHADHADA. A PB1 domain is found at 83–191; the sequence is AKLVKVAVDG…EAVNLSPRRS (109 aa).

This sequence belongs to the Aux/IAA family. Homodimers and heterodimers. As to expression, highly expressed in roots. Expressed in seedlings.

It localises to the nucleus. In terms of biological role, aux/IAA proteins are short-lived transcriptional factors that function as repressors of early auxin response genes at low auxin concentrations. This Oryza sativa subsp. japonica (Rice) protein is Auxin-responsive protein IAA23 (IAA23).